The sequence spans 159 residues: NADH-quinone oxidoreductase subunit B (159 aa).

Residues Cys-37, Cys-38, Cys-102, and Cys-132 each coordinate [4Fe-4S] cluster.

The protein belongs to the complex I 20 kDa subunit family. As to quaternary structure, NDH-1 is composed of 14 different subunits. Subunits NuoB, C, D, E, F, and G constitute the peripheral sector of the complex. [4Fe-4S] cluster is required as a cofactor.

Its subcellular location is the cell inner membrane. The enzyme catalyses a quinone + NADH + 5 H(+)(in) = a quinol + NAD(+) + 4 H(+)(out). NDH-1 shuttles electrons from NADH, via FMN and iron-sulfur (Fe-S) centers, to quinones in the respiratory chain. Couples the redox reaction to proton translocation (for every two electrons transferred, four hydrogen ions are translocated across the cytoplasmic membrane), and thus conserves the redox energy in a proton gradient. The chain is NADH-quinone oxidoreductase subunit B from Paraburkholderia phymatum (strain DSM 17167 / CIP 108236 / LMG 21445 / STM815) (Burkholderia phymatum).